Consider the following 271-residue polypeptide: Neurexophilin-1 (271 aa).

Residues 1 to 21 (MQAACWYVLLLLQPTIYLVTC) form the signal peptide. The segment at 22 to 97 (ANLTNGGKSE…WDWLRNSTDL (76 aa)) is II. 6 N-linked (GlcNAc...) asparagine glycosylation sites follow: Asn-23, Asn-68, Asn-93, Asn-146, Asn-156, and Asn-162. The III stretch occupies residues 98–176 (QEPRPRAKRR…LVPPTKIVEF (79 aa)). Residues 177–185 (DLAQQTVID) are IV (linker domain). Residues 186–271 (AKDSKSFNCR…HSDTPYFPSG (86 aa)) form a v (Cys-rich) region.

The protein belongs to the neurexophilin family.

It is found in the secreted. Its function is as follows. May be signaling molecules that resemble neuropeptides and that act by binding to alpha-neurexins and possibly other receptors. The chain is Neurexophilin-1 (NXPH1) from Pongo abelii (Sumatran orangutan).